The sequence spans 501 residues: MVRKPVVSTISKGGYLQGNVNGRLPSLGNKEPPGQEKVQLKRKVTLLRGVSIIIGTIIGAGIFISPKGVLQNTGSVGMSLTIWTVCGVLSLFGALSYAELGTTIKKSGGHYTYILEVFGPLPAFVRVWVELLIIRPAATAVISLAFGRYILEPFFIQCEIPELAIKLITAVGITVVMVLNSMSVSWSARIQIFLTFCKLTAILIIIVPGVMQLIKGQTQNFKDAFSGRDSSITRLPLAFYYGMYAYAGWFYLNFVTEEVENPEKTIPLAICISMAIVTIGYVLTNVAYFTTINAEELLLSNAVAVTFSERLLGNFSLAVPIFVALSCFGSMNGGVFAVSRLFYVASREGHLPEILSMIHVRKHTPLPAVIVLHPLTMIMLFSGDLDSLLNFLSFARWLFIGLAVAGLIYLRYKCPDMHRPFKVPLFIPALFSFTCLFMVALSLYSDPFSTGIGSVITLTGVPAYYLFIIWDKKPRWFRIMSEKITRTLQIILEVVPEEDKL.

Residues 1–43 lie on the Cytoplasmic side of the membrane; it reads MVRKPVVSTISKGGYLQGNVNGRLPSLGNKEPPGQEKVQLKRK. At S26 the chain carries Phosphoserine. A helical membrane pass occupies residues 44-64; that stretch reads VTLLRGVSIIIGTIIGAGIFI. Residues 65–74 are Extracellular-facing; the sequence is SPKGVLQNTG. A helical membrane pass occupies residues 75 to 95; that stretch reads SVGMSLTIWTVCGVLSLFGAL. At 96–101 the chain is on the cytoplasmic side; the sequence is SYAELG. An intramembrane segment occupies 102–116; it reads TTIKKSGGHYTYILE. At 117–130 the chain is on the cytoplasmic side; sequence VFGPLPAFVRVWVE. Residues 131-150 form a helical membrane-spanning segment; it reads LLIIRPAATAVISLAFGRYI. R135 contributes to the L-glutamate binding site. Topologically, residues 151–163 are extracellular; sequence LEPFFIQCEIPEL. The chain crosses the membrane as a helical span at residues 164 to 179; the sequence is AIKLITAVGITVVMVL. The Cytoplasmic segment spans residues 180 to 193; that stretch reads NSMSVSWSARIQIF. The chain crosses the membrane as a helical span at residues 194–210; the sequence is LTFCKLTAILIIIVPGV. Residues 211–234 lie on the Extracellular side of the membrane; sequence MQLIKGQTQNFKDAFSGRDSSITR. A helical transmembrane segment spans residues 235-255; it reads LPLAFYYGMYAYAGWFYLNFV. Y244 contributes to the L-glutamate binding site. The Cytoplasmic portion of the chain corresponds to 256–265; that stretch reads TEEVENPEKT. A helical membrane pass occupies residues 266–286; the sequence is IPLAICISMAIVTIGYVLTNV. Over 287–317 the chain is Extracellular; it reads AYFTTINAEELLLSNAVAVTFSERLLGNFSL. N314 carries N-linked (GlcNAc...) asparagine glycosylation. The helical transmembrane segment at 318-338 threads the bilayer; it reads AVPIFVALSCFGSMNGGVFAV. At 339 to 364 the chain is on the cytoplasmic side; it reads SRLFYVASREGHLPEILSMIHVRKHT. A helical membrane pass occupies residues 365-385; that stretch reads PLPAVIVLHPLTMIMLFSGDL. The Extracellular portion of the chain corresponds to 386–387; it reads DS. A helical transmembrane segment spans residues 388–408; the sequence is LLNFLSFARWLFIGLAVAGLI. At 409–422 the chain is on the cytoplasmic side; that stretch reads YLRYKCPDMHRPFK. The helical transmembrane segment at 423 to 443 threads the bilayer; it reads VPLFIPALFSFTCLFMVALSL. Topologically, residues 444 to 449 are extracellular; it reads YSDPFS. The chain crosses the membrane as a helical span at residues 450–470; the sequence is TGIGSVITLTGVPAYYLFIIW. Residues 471–501 lie on the Cytoplasmic side of the membrane; sequence DKKPRWFRIMSEKITRTLQIILEVVPEEDKL.

Belongs to the amino acid-polyamine-organocation (APC) superfamily. L-type amino acid transporter (LAT) (TC 2.A.3.8) family. As to quaternary structure, disulfide-linked heterodimer with the amino acid transport protein SLC3A2/4F2hc; this interaction mediates cell membrane localization.

Its subcellular location is the cell membrane. It is found in the cell projection. It localises to the microvillus membrane. It catalyses the reaction L-cystine(out) + L-glutamate(in) = L-cystine(in) + L-glutamate(out). It carries out the reaction an L-alpha-amino acid(in) + L-kynurenine(out) = an L-alpha-amino acid(out) + L-kynurenine(in). The enzyme catalyses N-acetyl-L-cysteine(out) + L-glutamate(in) = N-acetyl-L-cysteine(in) + L-glutamate(out). Heterodimer with SLC3A2, that functions as an antiporter by mediating the exchange of extracellular anionic L-cystine and intracellular L-glutamate across the cellular plasma membrane. Provides L-cystine for the maintenance of the redox balance between extracellular L-cystine and L-cysteine and for the maintenance of the intracellular levels of glutathione that is essential for cells protection from oxidative stress. The transport is sodium-independent, electroneutral with a stoichiometry of 1:1, and is drove by the high intracellular concentration of L-glutamate and the intracellular reduction of L-cystine. In addition, mediates the import of L-kynurenine leading to anti-ferroptotic signaling propagation required to maintain L-cystine and glutathione homeostasis. Moreover, mediates N-acetyl-L-cysteine uptake into the placenta leading to subsequently down-regulation of pathways associated with oxidative stress, inflammation and apoptosis. In vitro can also transport L-aspartate. May participate in astrocyte and meningeal cell proliferation during development and can provide neuroprotection by promoting glutathione synthesis and delivery from non-neuronal cells such as astrocytes and meningeal cells to immature neurons. Controls the production of pheomelanin pigment directly. This is Cystine/glutamate transporter from Pongo abelii (Sumatran orangutan).